The sequence spans 318 residues: Phosphate acetyltransferase (318 aa).

The protein belongs to the phosphate acetyltransferase and butyryltransferase family.

The protein localises to the cytoplasm. It catalyses the reaction acetyl-CoA + phosphate = acetyl phosphate + CoA. Its pathway is metabolic intermediate biosynthesis; acetyl-CoA biosynthesis; acetyl-CoA from acetate: step 2/2. In Paracoccus denitrificans, this protein is Phosphate acetyltransferase (pta).